The sequence spans 479 residues: Protein phosphatase 1B (479 aa).

Over residues 1–14 the composition is skewed to basic and acidic residues; that stretch reads MGAFLDKPKTEKHN. The segment at 1 to 20 is disordered; the sequence is MGAFLDKPKTEKHNAHGAGN. Gly-2 carries N-myristoyl glycine lipidation. Lys-12 participates in a covalent cross-link: Glycyl lysine isopeptide (Lys-Gly) (interchain with G-Cter in ISG15). The PPM-type phosphatase domain maps to 23–295; that stretch reads RYGLSSMQGW…DNMSIVLVCF (273 aa). 2 residues coordinate Mn(2+): Asp-60 and Gly-61. Residue Lys-142 forms a Glycyl lysine isopeptide (Lys-Gly) (interchain with G-Cter in ISG15) linkage. Mn(2+)-binding residues include Asp-243 and Asp-286. Ser-386 is subject to Phosphoserine. Residues 423–479 are disordered; the sequence is VEGEESPAEPAATATSSNSDAGNPVTMQESHTESESGLAELDSSNEDAGTKMSGEKI. Positions 430–439 are enriched in low complexity; sequence AEPAATATSS. Polar residues predominate over residues 440–451; the sequence is NSDAGNPVTMQE.

Belongs to the PP2C family. Monomer. Interacts with PAK6. Interacts with the phosphorylated form of IKBKB/IKKB. It depends on Mg(2+) as a cofactor. Mn(2+) serves as cofactor. Post-translationally, isgylation negatively regulates its activity. N-myristoylation is essential for the recognition of its substrates for dephosphorylation. In terms of tissue distribution, highly expressed in heart and skeletal muscle.

It localises to the cytoplasm. Its subcellular location is the cytosol. The protein localises to the membrane. The enzyme catalyses O-phospho-L-seryl-[protein] + H2O = L-seryl-[protein] + phosphate. It carries out the reaction O-phospho-L-threonyl-[protein] + H2O = L-threonyl-[protein] + phosphate. Functionally, enzyme with a broad specificity. Dephosphorylates CDK2 and CDK6 in vitro. Dephosphorylates PRKAA1 and PRKAA2. Inhibits TBK1-mediated antiviral signaling by dephosphorylating it at 'Ser-172'. Plays an important role in the termination of TNF-alpha-mediated NF-kappa-B activation through dephosphorylating and inactivating IKBKB/IKKB. The sequence is that of Protein phosphatase 1B (PPM1B) from Homo sapiens (Human).